The primary structure comprises 593 residues: ABC transporter F family member 2 (593 aa).

Basic residues predominate over residues 1–10 (MAKKGGKNNK). Positions 1 to 25 (MAKKGGKNNKSKKEVTPPTSDVEDE) are disordered. ABC transporter domains follow at residues 53–294 (VKIE…VNQM) and 364–583 (MHFD…RDLT). ATP is bound by residues 85–92 (GQNGCGKS) and 399–406 (GPNGAGKS).

It belongs to the ABC transporter superfamily. ABCF family. EF3 subfamily.

This is ABC transporter F family member 2 (abcF2) from Dictyostelium discoideum (Social amoeba).